A 770-amino-acid chain; its full sequence is Transducin-like enhancer protein 1 (770 aa).

Residues 1–131 form a q domain region; sequence MFPQSRHPTP…IIGQQQLQAQ (131 aa). 2 disordered regions span residues 128 to 157 and 176 to 346; these read LQAQHLSHGHGPPVPLTPHPSGLQPPGIPP and HLAI…PAME. Residues 132–199 are GP domain; that stretch reads HLSHGHGPPV…RHRDRESGTS (68 aa). Over residues 146 to 157 the composition is skewed to low complexity; the sequence is HPSGLQPPGIPP. Basic and acidic residues-rich tracts occupy residues 178 to 196 and 209 to 244; these read AIKDDKKHHDAERHRDRES and RSTDKRRNGPEFSSDIKKRKVDDKDNYDSDGDKSDD. The tract at residues 200-266 is ccN domain; that stretch reads NSLLVPDSLR…SPHASPTHSP (67 aa). The Nuclear localization signal signature appears at 225-228; that stretch reads KKRK. A Phosphoserine; by CK2 modification is found at Ser237. The segment covering 255 to 264 has biased composition (low complexity); sequence PSSPHASPTH. Residues Ser257, Ser261, and Ser265 each carry the phosphoserine; by CDK1 modification. Residues 265-281 show a composition bias toward basic and acidic residues; it reads SPRENGIDKNRLLKKDA. The segment at 267-450 is SP domain; sequence RENGIDKNRL…GGKPAYSFHV (184 aa). Over residues 282–297 the composition is skewed to low complexity; that stretch reads SGSPASTASSGSSSSL. Residue Ser284 is modified to Phosphoserine. Basic and acidic residues predominate over residues 298-308; sequence KSKEVSLHEKA. 6 WD repeats span residues 470–501, 528–558, 572–602, 614–644, 696–726, and 737–767; these read GIPRHARQINTLNHGEVVCAVTISNPTRHVYT, NRDNYIRSCKLLPDGCTLIVGGEASTLSIWD, SSAPACYALAISPDSKVCFSCCSDGNIAVWD, GHTDGASCIDISNDGTKLWTGGLDNTVRSWD, LHESCVLSLKFAYCGKWFVSTGKDNLLNAWR, and KESSSVLSCDISVDDKYIVTGSGDKKATVYE.

The protein belongs to the WD repeat Groucho/TLE family. In terms of assembly, homooligomer and heterooligomer with other family members. Binds RUNX1, RUNX3, FOXA2, KDM6A, UTY, histone H3, HESX1, ESRRG and the NF-kappa-B subunit RELA. Interacts with HES1 (via WRPW motif). Binds TCF7, LEF1, TCF7L1 and TCF7L2. Interacts with SIX3. Interacts with EFNB1. Interacts with TLE4. Interacts with FOXG1/BF-1; the interaction is inhibited by TLE6/GRG6. Phosphorylated, probably by CDK1. The degree of phosphorylation varies throughout the cell cycle, and is highest at the G2/M transition. Becomes hyperphosphorylated in response to cell differentiation and interaction with HES1 or RUNX1. In terms of processing, ubiquitinated by XIAP/BIRC4. As to expression, highly expressed in liver and lung. Detected at slightly lower levels in heart, brain, kidney and testis. Detected in fetal and adult stomach and small intestine, in adult ileum, duodenum and colon. Expressed in bone marrow-derived macrophages. In terms of tissue distribution, most abundant at the base of the crypts of Lieberkuhn in the small intestine.

The protein localises to the nucleus. It localises to the cytoplasm. In terms of biological role, transcriptional corepressor that binds to a number of transcription factors. Inhibits NF-kappa-B-regulated gene expression. Inhibits the transcriptional activation mediated by FOXA2, and by CTNNB1 and TCF family members in Wnt signaling. Enhances FOXG1/BF-1- and HES1-mediated transcriptional repression. The effects of full-length TLE family members may be modulated by association with dominant-negative AES. Unusual function as coactivator for ESRRG. The polypeptide is Transducin-like enhancer protein 1 (Tle1) (Mus musculus (Mouse)).